The sequence spans 271 residues: 5-deoxy-glucuronate isomerase (271 aa).

The protein belongs to the isomerase IolB family.

It carries out the reaction 5-deoxy-D-glucuronate = 5-dehydro-2-deoxy-D-gluconate. The protein operates within polyol metabolism; myo-inositol degradation into acetyl-CoA; acetyl-CoA from myo-inositol: step 4/7. Involved in the isomerization of 5-deoxy-glucuronate (5DG) to 5-dehydro-2-deoxy-D-gluconate (DKG or 2-deoxy-5-keto-D-gluconate). This Bacillus licheniformis (strain ATCC 14580 / DSM 13 / JCM 2505 / CCUG 7422 / NBRC 12200 / NCIMB 9375 / NCTC 10341 / NRRL NRS-1264 / Gibson 46) protein is 5-deoxy-glucuronate isomerase.